The following is a 389-amino-acid chain: S-adenosylmethionine synthase (389 aa).

Histidine 15 is a binding site for ATP. Aspartate 17 is a binding site for Mg(2+). Glutamate 43 is a K(+) binding site. The L-methionine site is built by glutamate 56 and glutamine 99. Positions 99-109 (QSPDIAQGVNE) are flexible loop. ATP-binding positions include 166–168 (DAK), 234–235 (RF), aspartate 243, 249–250 (RK), alanine 266, and lysine 270. L-methionine is bound at residue aspartate 243. Lysine 274 serves as a coordination point for L-methionine.

The protein belongs to the AdoMet synthase family. As to quaternary structure, homotetramer; dimer of dimers. Mg(2+) serves as cofactor. The cofactor is K(+).

It localises to the cytoplasm. It carries out the reaction L-methionine + ATP + H2O = S-adenosyl-L-methionine + phosphate + diphosphate. It participates in amino-acid biosynthesis; S-adenosyl-L-methionine biosynthesis; S-adenosyl-L-methionine from L-methionine: step 1/1. Functionally, catalyzes the formation of S-adenosylmethionine (AdoMet) from methionine and ATP. The overall synthetic reaction is composed of two sequential steps, AdoMet formation and the subsequent tripolyphosphate hydrolysis which occurs prior to release of AdoMet from the enzyme. In Neisseria gonorrhoeae (strain NCCP11945), this protein is S-adenosylmethionine synthase.